We begin with the raw amino-acid sequence, 466 residues long: Argininosuccinate lyase (466 aa).

The protein belongs to the lyase 1 family. Argininosuccinate lyase subfamily.

It is found in the cytoplasm. It carries out the reaction 2-(N(omega)-L-arginino)succinate = fumarate + L-arginine. It functions in the pathway amino-acid biosynthesis; L-arginine biosynthesis; L-arginine from L-ornithine and carbamoyl phosphate: step 3/3. The sequence is that of Argininosuccinate lyase from Synechococcus sp. (strain ATCC 27144 / PCC 6301 / SAUG 1402/1) (Anacystis nidulans).